The following is a 306-amino-acid chain: Probable rRNA-processing protein EBP2 (306 aa).

An N-acetylmethionine modification is found at M1. Disordered regions lie at residues 1–20 and 77–99; these read MDTP…LVTD and VPEI…VDPE. T3 carries the phosphothreonine modification. S7, S9, S11, S13, and S16 each carry phosphoserine. A Glycyl lysine isopeptide (Lys-Gly) (interchain with G-Cter in SUMO2) cross-link involves residue K94. Residues 138-169 adopt a coiled-coil conformation; the sequence is AEMAKSDLQMQKIRQKLQTKQAAMERSEKAKQ. Residues K179 and K218 each participate in a glycyl lysine isopeptide (Lys-Gly) (interchain with G-Cter in SUMO2) cross-link. The interval 213-306 is disordered; it reads LEGDQKPLAQ…TREKMKNRTH (94 aa). 2 positions are modified to phosphoserine: S264 and S270. A compositionally biased stretch (basic residues) spans 274-306; that stretch reads KTAHGRGLKRPGKKGSNKRPGKRTREKMKNRTH.

The protein belongs to the EBP2 family. Specifically interacts with EBV EBNA1. The EBNA1-EBP2 interaction is important for the stable segregation of EBV episomes during cell division. Interacts with WDR46. Ubiquitous.

It localises to the nucleus. The protein resides in the nucleolus. Functionally, required for the processing of the 27S pre-rRNA. This Homo sapiens (Human) protein is Probable rRNA-processing protein EBP2 (EBNA1BP2).